A 2599-amino-acid chain; its full sequence is Non-reducing polyketide synthase azaA (2599 aa).

Positions 95–231 are N-terminal acylcarrier protein transacylase domain (SAT); that stretch reads PNILLSPMVV…AARSISSLQQ (137 aa). Cysteine 132 serves as the catalytic Nucleophile; for transacylase activity. The active-site Proton donor/acceptor; for transacylase activity is histidine 250. The Ketosynthase family 3 (KS3) domain maps to 372–790; the sequence is PNEIAVIGMS…GSNASMVVAQ (419 aa). Active-site for beta-ketoacyl synthase activity residues include cysteine 539, histidine 674, and histidine 713. The interval 902 to 1193 is malonyl-CoA:ACP transacylase (MAT) domain; it reads FGGQISNYVG…ITSMASRALG (292 aa). The N-terminal hotdog fold stretch occupies residues 1282 to 1413; the sequence is PKTLWSLIEA…GKLAFLSGQD (132 aa). Residues 1282–1591 enclose the PKS/mFAS DH domain; sequence PKTLWSLIEA…YHKVAKASMS (310 aa). A product template (PT) domain region spans residues 1310 to 1589; the sequence is LVSGHVIANT…INYHKVAKAS (280 aa). Histidine 1314 acts as the Proton acceptor; for dehydratase activity in catalysis. Residues 1443–1591 are C-terminal hotdog fold; that stretch reads ADDIIQGRNI…YHKVAKASMS (149 aa). Residue aspartate 1499 is the Proton donor; for dehydratase activity of the active site. The segment at 1601 to 1652 is disordered; the sequence is EAAPSSSTRAHPTSSSSPRLPGPFVPEDKSQNETQTAGTNAVAKKKSEKSAQ. The span at 1602–1619 shows a compositional bias: low complexity; that stretch reads AAPSSSTRAHPTSSSSPR. The Carrier domain maps to 1653–1727; it reads QNVLDKTRAL…GLVEYVQSAV (75 aa). O-(pantetheine 4'-phosphoryl)serine is present on serine 1687. Positions 1749–1779 are disordered; that stretch reads NLAASPSSSSSSTNLTEDSSLDPTETTTNIS. Low complexity predominate over residues 1750-1766; sequence LAASPSSSSSSTNLTED. Over residues 1769–1779 the composition is skewed to polar residues; it reads LDPTETTTNIS. The interval 1952-2140 is methyltransferase domain; it reads DSLLNKLSYR…VGYGQVDWTD (189 aa). Positions 2222–2467 are NADPH-binding (R) domain; the sequence is ITGATGSLGV…LCWTPVNDVA (246 aa).

The cofactor is pantetheine 4'-phosphate.

It functions in the pathway secondary metabolite biosynthesis. Functionally, non-reducing polyketide synthase; part of the gene cluster that mediates the biosynthesis of azaphilones, a class of fungal metabolites characterized by a highly oxygenated pyrano-quinone bicyclic core and exhibiting a broad range of bioactivities. In the first step, the non-reducing polyketide synthase azaA forms the hexaketide precursor from successive condensations of five malonyl-CoA units, presumably with a simple acetyl-CoA starter unit. The reactive polyketide chain then undergoes a PT-mediated C2-C7 cyclization to afford the aromatic ring and is eventually released as an aldehyde through the R-domain. The putative ketoreductase azaE is proposed to catalyze the reduction of the terminal ketone resulting in the early culture product FK17-P2a. The monooxygenase azaH was demonstrated to be the only enzyme required to convert FK17-P2a to azanigerone E. AzaH first hydroxylates the benzaldehyde intermediate FK17-P2a at C4, which triggers the formation of the pyran-ring to afford azanigerone E. In parallel, the 2,4-dimethylhexanoyl chain is synthesized by the HR-PKS azaB and is proposed to be transferred to the C4-hydroxyl of azanigerone E by the acyltransferase azaD directly from the ACP domain of azaB. Alternatively, the 2,4-dimethyl-hexanoyl chain may be offloaded from the HR-PKS as a carboxylic acid and converted to an acyl-CoA by azaF. The resulting acyl-CoA molecule could then be taken up as a substrate by AzaD to form azanigerone B. To yield the carboxylic acid substituent in azanigerone A, the hydroxypropyl side chain of azanigerone B would need to undergo a C-C oxidative cleavage catalyzed by cytochrome P450 AzaI. AzaI is proposed to act on a vicinal diol that leads to a C-C bond scission either through an alkoxyradical intermediate or a peroxy complex. In the biosynthesis of azanigerone A, azanigerone B first undergoes hydroxylation at C10, possibly catalyzed by one of the two FAD-dependent monooxygenases encoded in the cluster, azaG or azaL, resulting in the vicinal diol azanigerone C. Oxidative cleavage of azanigerone C by azaI would yield the corresponding aldehyde derivative of azanigerone A. Finally, the dehydrogenase azaJ is proposed to convert the aldehyde functional group into the carboxylic acid, completing the conversion from azanigerone B to azanigerone A. Alternatively, the oxidation of aldehyde to carboxylic acid may be catalyzed by the same P450 enzyme azaI via consecutive oxidation or by endogenous alcohol dehydrogenase. The polypeptide is Non-reducing polyketide synthase azaA (Aspergillus niger (strain ATCC 1015 / CBS 113.46 / FGSC A1144 / LSHB Ac4 / NCTC 3858a / NRRL 328 / USDA 3528.7)).